We begin with the raw amino-acid sequence, 278 residues long: Dehydrogenase/reductase SDR family member 4 (278 aa).

36 to 60 (LVTASTDGIGFAIARRLAQDGAHVV) provides a ligand contact to NADP(+). The residue at position 92 (lysine 92) is an N6-acetyllysine; alternate. At lysine 92 the chain carries N6-succinyllysine; alternate. Lysine 105 is modified (N6-acetyllysine). Serine 169 contacts substrate. Tyrosine 182 serves as the catalytic Proton acceptor. Lysine 186 lines the NADP(+) pocket. Residue lysine 216 is modified to N6-acetyllysine; alternate. Lysine 216 is modified (N6-succinyllysine; alternate). At serine 220 the chain carries Phosphoserine. Lysine 227 and lysine 234 each carry N6-succinyllysine. The Peroxisomal targeting signal signature appears at 276 to 278 (SRL).

The protein belongs to the short-chain dehydrogenases/reductases (SDR) family. As to quaternary structure, homotetramer.

It is found in the peroxisome. The enzyme catalyses a secondary alcohol + NADP(+) = a ketone + NADPH + H(+). The catalysed reaction is 3beta-hydroxy-5beta-pregnane-20-one + NADP(+) = 5beta-pregnan-3,20-dione + NADPH + H(+). It carries out the reaction 5beta-dihydrotestosterone + NADPH + H(+) = 5beta-androstane-3beta,17beta-diol + NADP(+). It catalyses the reaction 5beta-androstane-3,17-dione + NADPH + H(+) = 3beta-hydroxy-5beta-androstane-17-one + NADP(+). The enzyme catalyses isatin + NADPH + H(+) = 3-hydroxyindolin-2-one + NADP(+). The catalysed reaction is lithocholate + NADP(+) = 3-oxo-5beta-cholan-24-oate + NADPH + H(+). It carries out the reaction 3-oxo-5beta-cholan-24-oate + NADPH + H(+) = isolithocholate + NADP(+). Its function is as follows. NADPH-dependent oxidoreductase which catalyzes the reduction of a variety of compounds bearing carbonyl groups including ketosteroids, alpha-dicarbonyl compounds, aldehydes, aromatic ketones and quinones. Reduces 3-ketosteroids and benzil into 3beta-hydroxysteroids and R-benzoin, respectively, in contrast to the stereoselectivity of non-primate DHRS4s which produce 3alpha-hydroxysteroids and S-benzoin. Diplays low activity toward all-trans-retinal and no activity toward 9-cis-retinal as compared to non-primate mammals. In the reverse reaction, catalyze the NAD-dependent oxidation of 3beta-hydroxysteroids and alcohol, but with much lower efficiency. Involved in the metabolism of 3beta-hydroxysteroids, isatin and xenobiotic carbonyl compounds. This is Dehydrogenase/reductase SDR family member 4 (DHRS4) from Pongo abelii (Sumatran orangutan).